We begin with the raw amino-acid sequence, 770 residues long: Nucleus-vacuole junction protein 2 (770 aa).

Residues 1-5 are Cytoplasmic-facing; sequence MASLK. Residues 6–26 form a helical; Signal-anchor for type II membrane protein membrane-spanning segment; the sequence is VFLAVYLLGGITFLPLVLFTL. Residues 27 to 770 are Lumenal-facing; sequence YKIHLLYSNL…EFEEQREPKL (744 aa). Positions 114–266 constitute a PH domain; sequence TALQEQILQR…WYYQLINASK (153 aa). N-linked (GlcNAc...) asparagine glycosylation is found at Asn228, Asn263, Asn279, Asn300, Asn391, Asn528, and Asn529. The region spanning 304–504 is the SMP-LTD domain; it reads NQLTTKWLNA…YPTPNEVYRG (201 aa). Disordered regions lie at residues 541-566, 578-600, and 615-770; these read EGGM…LKDL, TQTT…TKSR, and KDNV…EPKL. The segment covering 554–566 has biased composition (basic and acidic residues); sequence LRPERKKENLKDL. Residues 587-596 are compositionally biased toward polar residues; the sequence is NDDVSSSENS. Asn595 and Asn620 each carry an N-linked (GlcNAc...) asparagine glycan. A phosphoserine mark is found at Ser640 and Ser669. The span at 679-688 shows a compositional bias: basic and acidic residues; sequence LEGRKEKDTE. N-linked (GlcNAc...) asparagine glycosylation is present at Asn700. Polar residues-rich tracts occupy residues 713-725 and 736-751; these read FSVS…NSLK and LESS…QNRF. Residue Ser717 is modified to Phosphoserine. The N-linked (GlcNAc...) asparagine glycan is linked to Asn718. A phosphoserine mark is found at Ser720 and Ser723. Residues 756 to 770 show a composition bias toward basic and acidic residues; sequence FKQDLEFEEQREPKL.

The protein resides in the endoplasmic reticulum membrane. Its subcellular location is the nucleus membrane. Its function is as follows. During endoplasmic reticulum (ER) stress or when cellular ceramide levels increase, induces contacts between the ER and medial-Golgi complex to facilitate non-vesicular transport of ceramides from the ER to the Golgi complex where they are converted to complex sphingolipids, preventing toxic ceramide accumulation. The sequence is that of Nucleus-vacuole junction protein 2 from Saccharomyces cerevisiae (strain ATCC 204508 / S288c) (Baker's yeast).